The primary structure comprises 425 residues: Monoacylglycerol lipase ABHD2 (425 aa).

Residues 1 to 9 (MNAMLETPE) are Cytoplasmic-facing. Residues 10 to 30 (LPAVFDGVKLAAVAAVLYVIV) traverse the membrane as a helical; Signal-anchor for type II membrane protein segment. At 31-425 (RCLNLKSPTA…DTEQMEAELE (395 aa)) the chain is on the extracellular side. Residues 128–382 (MVICPGIANH…HGGHLGFFEG (255 aa)) form the AB hydrolase-1 domain. An N-linked (GlcNAc...) asparagine glycan is attached at Asn-136. Ser-207 (nucleophile) is an active-site residue. Residues Asp-345 and His-376 each act as charge relay system in the active site. A glycan (N-linked (GlcNAc...) asparagine) is linked at Asn-410.

The protein belongs to the AB hydrolase superfamily. AB hydrolase 4 family. Widely expressed with higher expression in testis. Expressed by vascular smooth muscle cells, non vascular smooth muscle cells and heart.

It is found in the cell membrane. Its subcellular location is the cytoplasmic vesicle. It localises to the secretory vesicle. The protein resides in the acrosome membrane. It carries out the reaction Hydrolyzes glycerol monoesters of long-chain fatty acids.. The catalysed reaction is an acetyl ester + H2O = an aliphatic alcohol + acetate + H(+). It catalyses the reaction a triacylglycerol + H2O = a diacylglycerol + a fatty acid + H(+). The enzyme catalyses 2-(5Z,8Z,11Z,14Z-eicosatetraenoyl)-glycerol + H2O = glycerol + (5Z,8Z,11Z,14Z)-eicosatetraenoate + H(+). It carries out the reaction a butanoate ester + H2O = an aliphatic alcohol + butanoate + H(+). The catalysed reaction is hexadecanoate ester + H2O = an aliphatic alcohol + hexadecanoate + H(+). With respect to regulation, acylglycerol lipase activity is activated upon binding to progesterone. In terms of biological role, progesterone-dependent acylglycerol lipase that catalyzes hydrolysis of endocannabinoid arachidonoylglycerol (AG) from cell membrane. Acts as a progesterone receptor: progesterone-binding activates the acylglycerol lipase activity, mediating degradation of 1-arachidonoylglycerol (1AG) and 2-arachidonoylglycerol (2AG) to glycerol and arachidonic acid (AA). Also displays an ester hydrolase activity against acetyl ester, butanoate ester and hexadecanoate ester. Plays a key role in sperm capacitation in response to progesterone by mediating degradation of 2AG, an inhibitor of the sperm calcium channel CatSper, leading to calcium influx via CatSper and sperm activation. Involved in acrosomal reaction. May also play a role in smooth muscle cells migration. The chain is Monoacylglycerol lipase ABHD2 (Abhd2) from Mus musculus (Mouse).